The primary structure comprises 55 residues: Mitochondrial import receptor subunit TOM7 homolog (55 aa).

Residues 1–20 are Cytoplasmic-facing; that stretch reads MVKLSKEAKQRLQQLFKGGQ. Residues 21-36 traverse the membrane as a helical segment; sequence FAIRWGFIPLVIYLGF. Residues 37-55 lie on the Mitochondrial intermembrane side of the membrane; sequence KRGADPGMPEPTVLSLLWG.

The protein belongs to the Tom7 family. In terms of assembly, forms part of the preprotein translocase complex of the outer mitochondrial membrane (TOM complex) which consists of at least 7 different proteins (TOMM5, TOMM6, TOMM7, TOMM20, TOMM22, TOMM40 and TOMM70).

It localises to the mitochondrion outer membrane. Functionally, required for assembly and stability of the TOM complex. Positive regulator of PRKN translocation to damaged mitochondria. Acts probably by stabilizing PINK1 on the outer membrane of depolarized mitochondria. The polypeptide is Mitochondrial import receptor subunit TOM7 homolog (TOMM7) (Bos taurus (Bovine)).